We begin with the raw amino-acid sequence, 177 residues long: Large ribosomal subunit protein uL6 (177 aa).

This sequence belongs to the universal ribosomal protein uL6 family. As to quaternary structure, part of the 50S ribosomal subunit.

Its function is as follows. This protein binds to the 23S rRNA, and is important in its secondary structure. It is located near the subunit interface in the base of the L7/L12 stalk, and near the tRNA binding site of the peptidyltransferase center. The chain is Large ribosomal subunit protein uL6 from Methylobacterium sp. (strain 4-46).